Consider the following 79-residue polypeptide: Cytochrome b (79 aa).

3 helical membrane-spanning segments follow: residues 1 to 7 (TALLLAA), 31 to 52 (WLIRNLHANGASFFFICIYLHI), and 67 to 79 (WNIGVILLLTLMA). Heme b-binding residues include H37 and H51.

Belongs to the cytochrome b family. In terms of assembly, the cytochrome bc1 complex contains 11 subunits: 3 respiratory subunits (MT-CYB, CYC1 and UQCRFS1), 2 core proteins (UQCRC1 and UQCRC2) and 6 low-molecular weight proteins (UQCRH/QCR6, UQCRB/QCR7, UQCRQ/QCR8, UQCR10/QCR9, UQCR11/QCR10 and a cleavage product of UQCRFS1). This cytochrome bc1 complex then forms a dimer. Heme b is required as a cofactor.

It is found in the mitochondrion inner membrane. In terms of biological role, component of the ubiquinol-cytochrome c reductase complex (complex III or cytochrome b-c1 complex) that is part of the mitochondrial respiratory chain. The b-c1 complex mediates electron transfer from ubiquinol to cytochrome c. Contributes to the generation of a proton gradient across the mitochondrial membrane that is then used for ATP synthesis. The sequence is that of Cytochrome b (MT-CYB) from Pomatostomus superciliosus (White-browed babbler).